A 39-amino-acid polypeptide reads, in one-letter code: Fuctinin-3 (39 aa).

Positions 1 to 39 (KELNSNHDGADETSEKEQQEAIEHIDEVQNEIDRLNETA) are disordered.

This sequence to human SET/PHAPII protein. As to quaternary structure, oligomer.

It is found in the cytoplasm. Functionally, has a role in the physiological regulation of fucosylation processes. The sequence is that of Fuctinin-3 from Rattus norvegicus (Rat).